The primary structure comprises 91 residues: Alpha-elapitoxin-Oh2b (91 aa).

The signal sequence occupies residues 1–21; the sequence is MKTLLLTLVVMTIVCLDLGYT. 5 disulfides stabilise this stretch: C24-C41, C34-C62, C47-C51, C66-C77, and C78-C83.

This sequence belongs to the three-finger toxin family. Long-chain subfamily. Type II alpha-neurotoxin sub-subfamily. Monomer. Expressed by the venom gland.

It is found in the secreted. Functionally, binds with high affinity to muscular (alpha-1/CHRNA1) and neuronal (alpha-7/CHRNA7) nicotinic acetylcholine receptor (nAChR) and inhibits acetylcholine from binding to the receptor, thereby impairing neuromuscular and neuronal transmission. Recombinant LNTX1 leads to a functional block of the muscle-type acetylcholine receptors. Has a cytotoxic activity. This neurotoxin is lethal. The chain is Alpha-elapitoxin-Oh2b from Ophiophagus hannah (King cobra).